We begin with the raw amino-acid sequence, 46 residues long: Protein PsbN (46 aa).

A helical membrane pass occupies residues 5-27; sequence TLVTLFVSGLLMSFTGYALYTAF.

This sequence belongs to the PsbN family.

The protein resides in the plastid membrane. In terms of biological role, may play a role in photosystem I and II biogenesis. This chain is Protein PsbN, found in Cuscuta obtusiflora (Peruvian dodder).